The primary structure comprises 370 residues: UDP-N-acetylglucosamine--N-acetylmuramyl-(pentapeptide) pyrophosphoryl-undecaprenol N-acetylglucosamine transferase (370 aa).

UDP-N-acetyl-alpha-D-glucosamine-binding positions include 10 to 12 (TGG), Asn126, Ser200, Ile255, and Gln300.

Belongs to the glycosyltransferase 28 family. MurG subfamily.

Its subcellular location is the cell membrane. The enzyme catalyses Mur2Ac(oyl-L-Ala-gamma-D-Glu-L-Lys-D-Ala-D-Ala)-di-trans,octa-cis-undecaprenyl diphosphate + UDP-N-acetyl-alpha-D-glucosamine = beta-D-GlcNAc-(1-&gt;4)-Mur2Ac(oyl-L-Ala-gamma-D-Glu-L-Lys-D-Ala-D-Ala)-di-trans,octa-cis-undecaprenyl diphosphate + UDP + H(+). It functions in the pathway cell wall biogenesis; peptidoglycan biosynthesis. Functionally, cell wall formation. Catalyzes the transfer of a GlcNAc subunit on undecaprenyl-pyrophosphoryl-MurNAc-pentapeptide (lipid intermediate I) to form undecaprenyl-pyrophosphoryl-MurNAc-(pentapeptide)GlcNAc (lipid intermediate II). This chain is UDP-N-acetylglucosamine--N-acetylmuramyl-(pentapeptide) pyrophosphoryl-undecaprenol N-acetylglucosamine transferase, found in Lactobacillus johnsonii (strain CNCM I-12250 / La1 / NCC 533).